The sequence spans 1000 residues: Chloride channel protein D (1000 aa).

Composition is skewed to low complexity over residues 1-16 (MSSGNPFDNGNPNDGN) and 38-60 (NNNNNNNNNNNNNNNNNNNNSSV). Residues 1-90 (MSSGNPFDNG…SYDDDGDDEE (90 aa)) form a disordered region. Residues 1-256 (MSSGNPFDNG…LASDHEVLRW (256 aa)) are Cytoplasmic-facing. Residues 71 to 80 (RIQEEERLTE) show a composition bias toward basic and acidic residues. 10 consecutive transmembrane segments (helical) span residues 257-277 (IVSLFMGIFIGVIAYFSHACV), 290-310 (AVLELDLFLAFLTYFLLNTLL), 416-436 (GAGAGVAAAFSAPLGGTLFSL), 442-462 (FWSIALTWRAFFCCMVATYTM), 493-513 (IIPFLLIGVLGGLGGALFTWI), 534-554 (LEVFLIIGLSTCIQFFLPLFF), 678-698 (LGLWPMFLFCIFYLFFAAYTA), 710-730 (MLVIGASYGRFVGLVVYHILG), 733-753 (VSIDPGIYAVMGAAAFMGGVS), and 772-792 (YLLPLMLTVMTAKWVADALIH). CBS domains lie at 824 to 881 (MAKK…ISDV) and 926 to 984 (MNLT…YREL).

Belongs to the chloride channel (TC 2.A.49) family.

It is found in the membrane. Functionally, voltage-gated chloride channel. Chloride channels may have several functions including the regulation of cell volume, membrane potential stabilization and signal transduction. Required for normal aggregation. This chain is Chloride channel protein D (clcD), found in Dictyostelium discoideum (Social amoeba).